A 119-amino-acid polypeptide reads, in one-letter code: Microtubule nucleation factor SSNA1 (119 aa).

The residue at position 2 (Thr-2) is an N-acetylthreonine. The important for localization to the centrosome stretch occupies residues 2–32 (TQQGAALQNYNNELVKCIEELCQKREELCRQ). A coiled-coil region spans residues 13-70 (NELVKCIEELCQKREELCRQIQEEEDEKQRLQNEVRQLTEKLARVNENLARKIASRNE).

The protein belongs to the SSNA1 family. Self-associates to form fibrils. Also forms dimers as well as monomers. Interacts with SPAST. As to expression, widely expressed.

It is found in the nucleus. It localises to the cytoplasm. The protein localises to the cytoskeleton. The protein resides in the microtubule organizing center. Its subcellular location is the centrosome. It is found in the centriole. It localises to the midbody. The protein localises to the flagellum basal body. The protein resides in the flagellum axoneme. Its subcellular location is the cell projection. It is found in the axon. Microtubule-binding protein which stabilizes dynamic microtubules by slowing growth and shrinkage at both plus and minus ends and serves as a sensor of microtubule damage, protecting microtubules from the microtubule-severing enzyme SPAST. Induces microtubule branching which is mediated by the formation of long SSNA1 fibrils which guide microtubule protofilaments to split apart from the mother microtubule and form daughter microtubules. Plays a role in axon outgrowth and branching. Required for cell division. The polypeptide is Microtubule nucleation factor SSNA1 (Homo sapiens (Human)).